The following is a 1810-amino-acid chain: MGDGERREDENPTTSAADDDDDEDYDEPGGGNHFLGFMFGNVDDSGDLDADYLDEDAKEHLFALADKLGPSLKDIDLIKPSAAPTDPSEQDYDAKAEDAVDYEDIDEEYDGPEVEAATEEDHLLSKKDYFSSNAVYASVNSKVSVFDEENYDEDEEPPNDNDLPSDNIVQNCTSASAEQLDMAPSNDNLAVEKMSSSLSEPEESFESEAFQKEMVAEEQLESKTATSLPVLCIEDGSVILKFSEIFGAQEPVRKAKMDRHKRPVNKELQITNFTDIVEEDEEVFLRSTIQNLSALKHIKTNDNFVESDSDESTSDVALRLKDSCLSEQPMKDKDIPTAVQSPVFPDFYPLEHENWENDIVWGNSPTTAIQPCLTSCAISKESLDDHNEDQAEGYVSGCWDVQNKFHSSSVMADPFGHTEIPDSTSYRSPENSYSPLRKETAQENNSLDEPNNITQPVKIDTTRHLNKLSLLNKELLEGSWLDNIVWDPSEDVPKPKLIFDLKDDHMLFEILDEKNGDHLRSHARAMIVTRPMKTSAVENVDHNNQAIALSGRFNISNDKFYSNRKMSQQARSHAKKRATMGLKLVHSVPAQKLQTMKPKLSIKEIANFHRPKAKWYPHENKLTARFQGDECSHGPMTAIVMTLGGKGVKFLVNAEETPLSVKSKASKKLEFKPSEKIKLFCSGKELQDDISLAMQNVRPNSILHVVRTEIHLWPKAQRLPGENKPLRPPGAFRKKSDLSVKDGHVFLMEYCEERPLLLANAGMAARLCTYYQKTSPSDQTATSLRSNSDGLGTMLAIDPADKSPFLGNIRSGSHQSCLETNMYRAPVFPHKVATTDYLLVRSPKGMLSLRRIDKLYAVGQQEPHMEVFSPGTKNMQNYILNRILVYVYREFRAREKPGIIPQIRADELPIQPPITEAIVRKRLKHCADLRKGPKGHLFYIQRPDFRIPSEEELRRLLTPENVCCYESMQAGQYRLKHLGIEKLTQPVGLASAMNQLPDEAIELAAAAHIERELQITSWNLTSNFVACTNQDKENIERLEITGVGDPSGRGLGFSYVRVTPKAPVSNSTHKKKSAAAKGTTVTGTDADLRRLSMDAARELLLKFGVPEEQIDKLTRWHRIAMVRKLSSEQAASGVTMDEIPVSKFARGQRMSFLQLQQQTKEKCQEIWDRQIQSLSAMDGNENGSDTEANSDLDSFAGDLENLLDAEEFDDEDVGNTDIRSDKMDGMRGLKMRRCHTQSQINEEIQDDVAEAALVEKLLEESDSDMKRKKQPVETTNYSTPMYNQGNKMKQGKAGQMIKSSVYAGALTPKESIPREAKEVENFAEGSLPSKLRTKTGFDANDDIILVKRKNIPGKDGFKEKRQGARGDTLVCGACGQLGHMRTNKLCPKYGEDPETSEMDVNSIRSHPPDIVSNAQIKTSNKRLVAKVSSEAFETEGPESIEKAKPVPVKFKCGAPEKSLDRNMSISASLVSDKRMMDATDSKSTGKVNKIKISNKIKYDDYPPDTPKPSVVIRPPAEVEKDLPRKKIIIKQPKVLGDQQRPTELRSGQEPRKTRKIVELSSFEKRDREDDNGFSGQPIQINSSHDRGWGLVGKRSKGIMESSESWRAFEEQRERQEQRLIEARIYDARREDELQKAKKKNKKKKKHEFRDDDLLDPRPYKNDRRVPERGRAAKRRTPADMTEYTPPAKRHRGGEVELSNILEKIVDHLRTMSCSFLFRKPVTKKEAPDYFDIIERPMDLGTIRDKVRKMEYKNREDFRHDVAQIALNAHTYNLNRHPHIPPLADELLELCDYLLEESADVLDDAEYAIED.

Positions Met1–Glu10 are enriched in basic and acidic residues. Disordered stretches follow at residues Met1–Met38 and Asp413–Thr454. The span at Ala17–Glu27 shows a compositional bias: acidic residues. Polar residues-rich tracts occupy residues Pro421–Ser434 and Gln442–Thr454. Positions Met636–Leu712 constitute a Ubiquitin-like domain. Positions Ile1240–Glu1260 form a coiled coil. Disordered regions lie at residues Ser1261 to Gly1291, Ser1493 to Glu1609, and Glu1632 to Gly1692. Polar residues predominate over residues Val1272–Lys1287. Over residues Arg1540–Asp1570 the composition is skewed to basic and acidic residues. The segment covering Phe1573–Ser1582 has biased composition (polar residues). A coiled-coil region spans residues Ala1627–Glu1647. Over residues Ala1636–His1646 the composition is skewed to basic residues. The span at Glu1647–Arg1670 shows a compositional bias: basic and acidic residues. A Bromo domain is found at Lys1688–Ser1797.

Belongs to the TAF1 family. In terms of assembly, TAF1 is the largest component of transcription factor TFIID that is composed of TBP and a variety of TBP-associated factors.

The protein localises to the nucleus. Its function is as follows. Largest component and core scaffold of the TFIID basal transcription factor complex. This chain is Transcription initiation factor TFIID subunit 1 (TAF1), found in Oryza sativa subsp. japonica (Rice).